A 569-amino-acid chain; its full sequence is Cytochrome P450 monooxygenase abl1 (569 aa).

Cys-464 lines the heme pocket.

It belongs to the cytochrome P450 family. Heme is required as a cofactor.

It participates in hormone biosynthesis. Cytochrome P450 monooxygenase; part of the gene cluster that mediates the biosynthesis of abscisic acid (ABA), a phytohormone that acts antagonistically toward salicylic acid (SA), jasmonic acid (JA) and ethylene (ETH) signaling, to impede plant defense responses. The first step of the pathway catalyzes the reaction from farnesyl diphosphate to alpha-ionylideneethane performed by the alpha-ionylideneethane synthase abl3 via a three-step reaction mechanism involving 2 neutral intermediates, beta-farnesene and allofarnesene. The cytochrome P450 monooxygenase abl1 might then be involved in the conversion of alpha-ionylideneethane to alpha-ionylideneacetic acid. Alpha-ionylideneacetic acid is further converted to abscisic acid in 2 steps involving the cytochrome P450 monooxygenase abl2 and the short-chain dehydrogenase/reductase abl4, via the intermediates 1'-deoxy-ABA or 1',4'-trans-diol-ABA, depending on the order of action of these 2 enzymes. Abl2 is responsible for the hydroxylation of carbon atom C-1' and abl4 might be involved in the oxidation of the C-4' carbon atom. The protein is Cytochrome P450 monooxygenase abl1 of Leptosphaeria maculans (strain JN3 / isolate v23.1.3 / race Av1-4-5-6-7-8) (Blackleg fungus).